The sequence spans 712 residues: Asp/Glu-specific dipeptidyl-peptidase (712 aa).

A signal peptide spans 1 to 18 (MKRFFKMALFLGVSALYG). Residues His-84, Asp-220, and Ser-647 each act as charge relay system in the active site.

This sequence belongs to the peptidase S46 family.

Its function is as follows. Catalyzes the removal of dipeptides from the N-terminus of oligopeptides. Shows a strict specificity for acidic residues (Asp or Glu) in the P1 position, and has probably a hydrophobic residue preference at the P2 position. Preferentially cleaves the synthetic substrate Leu-Asp-methylcoumaryl-7-amide (Leu-Asp-MCA) as compared to Leu-Glu-MCA. The protein is Asp/Glu-specific dipeptidyl-peptidase (dpp11) of Capnocytophaga gingivalis.